Consider the following 227-residue polypeptide: 2-C-methyl-D-erythritol 4-phosphate cytidylyltransferase (227 aa).

The protein belongs to the IspD/TarI cytidylyltransferase family. IspD subfamily.

The enzyme catalyses 2-C-methyl-D-erythritol 4-phosphate + CTP + H(+) = 4-CDP-2-C-methyl-D-erythritol + diphosphate. It participates in isoprenoid biosynthesis; isopentenyl diphosphate biosynthesis via DXP pathway; isopentenyl diphosphate from 1-deoxy-D-xylulose 5-phosphate: step 2/6. Catalyzes the formation of 4-diphosphocytidyl-2-C-methyl-D-erythritol from CTP and 2-C-methyl-D-erythritol 4-phosphate (MEP). The polypeptide is 2-C-methyl-D-erythritol 4-phosphate cytidylyltransferase (Caldanaerobacter subterraneus subsp. tengcongensis (strain DSM 15242 / JCM 11007 / NBRC 100824 / MB4) (Thermoanaerobacter tengcongensis)).